We begin with the raw amino-acid sequence, 318 residues long: 1-aminocyclopropane-1-carboxylate oxidase (318 aa).

Residues 153–253 (PNFGTKVANY…RMSIASFYNP (101 aa)) enclose the Fe2OG dioxygenase domain. The Fe cation site is built by His177, Asp179, and His234.

Belongs to the iron/ascorbate-dependent oxidoreductase family. Fe cation is required as a cofactor.

The enzyme catalyses 1-aminocyclopropane-1-carboxylate + L-ascorbate + O2 = ethene + L-dehydroascorbate + hydrogen cyanide + CO2 + 2 H2O. It participates in alkene biosynthesis; ethylene biosynthesis via S-adenosyl-L-methionine; ethylene from S-adenosyl-L-methionine: step 2/2. The sequence is that of 1-aminocyclopropane-1-carboxylate oxidase (DK-ACO1) from Diospyros kaki (Kaki persimmon).